The primary structure comprises 250 residues: 2,3-bisphosphoglycerate-dependent phosphoglycerate mutase (250 aa).

Residues 10–17 (RHGESQWN), 23–24 (TG), R62, 89–92 (ERHY), K100, 116–117 (RR), and 185–186 (GN) contribute to the substrate site. H11 acts as the Tele-phosphohistidine intermediate in catalysis. The active-site Proton donor/acceptor is the E89.

This sequence belongs to the phosphoglycerate mutase family. BPG-dependent PGAM subfamily. In terms of assembly, homodimer.

The catalysed reaction is (2R)-2-phosphoglycerate = (2R)-3-phosphoglycerate. It participates in carbohydrate degradation; glycolysis; pyruvate from D-glyceraldehyde 3-phosphate: step 3/5. Functionally, catalyzes the interconversion of 2-phosphoglycerate and 3-phosphoglycerate. This chain is 2,3-bisphosphoglycerate-dependent phosphoglycerate mutase, found in Salmonella dublin (strain CT_02021853).